Here is a 424-residue protein sequence, read N- to C-terminus: Putative polyketide beta-ketoacyl synthase 2 (424 aa).

Residues 13–416 form the Ketosynthase family 3 (KS3) domain; sequence SRRAVVTGLG…GSNSALVLRR (404 aa).

This sequence belongs to the thiolase-like superfamily. Beta-ketoacyl-ACP synthases family.

In terms of biological role, involved in developmentally regulated synthesis of a compound biosynthetically related to polyketide antibiotics which is essential for spore color in Streptomyces coelicolor. The sequence is that of Putative polyketide beta-ketoacyl synthase 2 from Streptomyces coelicolor (strain ATCC BAA-471 / A3(2) / M145).